Here is a 1667-residue protein sequence, read N- to C-terminus: Androglobin (1667 aa).

The segment covering 1 to 11 (MASKQTKKKEV) has biased composition (basic residues). Disordered stretches follow at residues 1-45 (MASK…KGKF), 347-387 (SLTT…KFSL), and 540-566 (GSDLPSVSETDETATHSQTDLSQITKA). Residues 70 to 411 (KDKTGKSPVF…SLSDCSSAIQ (342 aa)) form the Calpain catalytic domain. Residues 353–384 (APEKSDKVPKEKADARDIGKKRSKDGEKEKFK) show a composition bias toward basic and acidic residues. The span at 554–566 (THSQTDLSQITKA) shows a compositional bias: polar residues. A Globin; C-terminal part domain is found at 763–890 (HICSMVSFVI…EEVSLVEWLD (128 aa)). 2 residues coordinate heme b: glutamine 792 and histidine 824. Residues 906-935 (EVAAAIKIQAMWRGTYVRLLMKARIPDTKE) enclose the IQ domain. Residues 936–968 (NISVADTLQKVWAVLEMNLEQYAVSLLRLMFKS) enclose the Globin; N-terminal part domain. 2 disordered regions span residues 1297–1355 (INLG…QQED) and 1420–1522 (TSDA…RSPT). The span at 1301-1315 (SPDSHTISEGQKSSV) shows a compositional bias: polar residues. Composition is skewed to basic and acidic residues over residues 1325–1340 (EKSSEKEKTAKEKQAP) and 1433–1450 (TKPKEEVETAARGVKEPN). Positions 1451–1468 (SKNSAGSESKEMTQTGSG) are enriched in polar residues. Residues 1487 to 1498 (STSSESGGVSSP) are compositionally biased toward low complexity. A compositionally biased stretch (basic and acidic residues) spans 1499 to 1511 (GKEEREQSTRKEN). Over residues 1512 to 1522 (IQTGPRTRSPT) the composition is skewed to polar residues. Residues 1588–1629 (QEERLKLKDEVLDMYKEMQDSLDEARQKIFDIREEYRNKLLE) adopt a coiled-coil conformation. The disordered stretch occupies residues 1646–1667 (KLETEKMTPAPDTQKKKKGKKK).

In the central section; belongs to the globin family. The protein in the N-terminal section; belongs to the peptidase C2 family. As to quaternary structure, interacts with septin SEPT10; contributes to in vitro proteolytic cleavage of SEPT10 in a calmodulin-dependent manner. Interacts with CFAP69. Interacts with SPEF2. May interact with calmodulin.

The protein localises to the cell projection. It localises to the cilium. The protein resides in the flagellum. Its function is as follows. Probable chimeric globin with a bis-histidyl six-coordinate heme-iron atom through which it could bind dioxygen, carbon monoxide and nitric oxide. Required for sperm flagellum formation and maturation of elongating spermatids, thus playing an essential role in male fertility. The chain is Androglobin from Homo sapiens (Human).